The sequence spans 88 residues: Large ribosomal subunit protein bL27 (88 aa).

This sequence belongs to the bacterial ribosomal protein bL27 family.

The protein is Large ribosomal subunit protein bL27 of Mycobacterium leprae (strain TN).